A 448-amino-acid chain; its full sequence is Probable glycine dehydrogenase (decarboxylating) subunit 1 (448 aa).

It belongs to the GcvP family. N-terminal subunit subfamily. In terms of assembly, the glycine cleavage system is composed of four proteins: P, T, L and H. In this organism, the P 'protein' is a heterodimer of two subunits.

The enzyme catalyses N(6)-[(R)-lipoyl]-L-lysyl-[glycine-cleavage complex H protein] + glycine + H(+) = N(6)-[(R)-S(8)-aminomethyldihydrolipoyl]-L-lysyl-[glycine-cleavage complex H protein] + CO2. Functionally, the glycine cleavage system catalyzes the degradation of glycine. The P protein binds the alpha-amino group of glycine through its pyridoxal phosphate cofactor; CO(2) is released and the remaining methylamine moiety is then transferred to the lipoamide cofactor of the H protein. This Geobacillus kaustophilus (strain HTA426) protein is Probable glycine dehydrogenase (decarboxylating) subunit 1.